The chain runs to 1151 residues: Elicitor of plant defense protein 1 (1151 aa).

Disordered stretches follow at residues 22–130 (YQDP…TLGE), 178–197 (ERIR…RSIK), and 236–255 (NYNS…DMHP). Acidic residues predominate over residues 39 to 49 (IIEDGEPEDEW). The span at 64–99 (QNSASRLSKMSLTERFSIQTLDDTDGNTKSNRSSAT) shows a compositional bias: polar residues. Residues 104 to 122 (NPPDFSNGNDDSNGNSQNP) show a composition bias toward low complexity. Residues 178–187 (ERIRAEESDS) are compositionally biased toward basic and acidic residues. Residues 242–500 (PPPEPLNTDP…NLCTEAFNPL (259 aa)) enclose the uDENN domain. The cDENN domain occupies 524 to 656 (EIPGSRTIDI…ARRKLMSLLQ (133 aa)). Residues 658-1019 (AAPHKLRYGV…DREMQPANDA (362 aa)) form the dDENN domain. Polar residues-rich tracts occupy residues 695–711 (STPK…SSSG) and 744–760 (TSKS…SPVS). Residues 695 to 809 (STPKSTLGKW…SSSFGVDKHP (115 aa)) are disordered. Residues 784–798 (LREKRSGHFGEEKMR) show a composition bias toward basic and acidic residues. Residues 886 to 934 (GHCFNYMPKDNTSMCTICNDLAEGDGVYRCTGCKIVSHGRCLGYCSLIC) form a Phorbol-ester/DAG-type zinc finger.

It belongs to the EPD1 elicitor family.

Its subcellular location is the secreted. It localises to the host cell. Functionally, acts as an elicitor that triggers cell death and defense responses in the host plants. The chain is Elicitor of plant defense protein 1 from Gibberella zeae (strain ATCC MYA-4620 / CBS 123657 / FGSC 9075 / NRRL 31084 / PH-1) (Wheat head blight fungus).